We begin with the raw amino-acid sequence, 511 residues long: MIRSVVIVGGGTAGWMTASYLKAAFDDRIDVTLVESGNVRRIGVGEATFSTVRHFFDYLGLDEREWLPRCAGGYKLGIRFENWSEPGEYFYHPFERLRVVDGFNMAEWWLAVGDRRTSFSEACYLTHRLCEAKRAPRMLDGSLFASQVDESLGRSTLAEQRAQFPYAYHFDADEVARYLSEYAIARGVRHVVDDVQHVGQDERGWISGVHTKQHGEISGDLFVDCTGFRGLLINQTLGGRFQSFSDVLPNNRAVALRVPRENDEDMRPYTTATAMSAGWMWTIPLFKRDGNGYVYSDEFISPEEAERELRSTVAPGRDDLEANHIQMRIGRNERTWINNCVAVGLSAAFVEPLESTGIFFIQHAIEQLVKHFPGERWDPVLISAYNERMAHMVDGVKEFLVLHYKGAQREDTPYWKAAKTRAMPDGLARKLELSASHLLDEQTIYPYYHGFETYSWITMNLGLGIVPERPRPALLHMDPAPALAEFERLRREGDELIAALPSCYEYLASIQ.

Residues glycine 10, alanine 13, serine 36, valine 39, isoleucine 42, valine 44, and alanine 47 each contribute to the FAD site. Serine 50 is a binding site for L-tryptophan. Residue lysine 75 is part of the active site. L-tryptophan-binding residues include proline 93, glutamine 160, and glutamine 163. FAD contacts are provided by valine 195 and leucine 345. Chloride is bound by residues threonine 356 and glycine 357. Isoleucine 358 contributes to the FAD binding site. L-tryptophan contacts are provided by glycine 450 and tyrosine 454.

This sequence belongs to the flavin-dependent halogenase family. Bacterial tryptophan halogenase subfamily. In terms of assembly, homodimer.

It carries out the reaction L-tryptophan + FADH2 + chloride + O2 = 5-chloro-L-tryptophan + FAD + 2 H2O. The protein operates within antibiotic biosynthesis. In terms of biological role, involved in the biosynthesis of the antibiotic compound pyrroindomycin B. Catalyzes the chlorination of tryptophan (Trp) at C5 position to yield 5-chloro-L-tryptophan. It is also able to use bromide ions to generate monobrominated Trp, but the brominating activity is only about 75% of the chlorinating activity. This chain is Tryptophan 5-halogenase PyrH, found in Streptomyces rugosporus.